Reading from the N-terminus, the 407-residue chain is Multidrug resistance protein MdtH (407 aa).

A run of 10 helical transmembrane segments spans residues cysteine 13–isoleucine 33, leucine 88–leucine 108, valine 139–leucine 159, phenylalanine 163–tryptophan 183, phenylalanine 210–methionine 230, tryptophan 247–serine 267, leucine 277–leucine 297, histidine 298–arginine 318, leucine 340–glycine 360, and leucine 368–phenylalanine 388.

The protein belongs to the major facilitator superfamily. DHA1 family. MdtH (TC 2.A.1.2.21) subfamily.

It localises to the cell inner membrane. This chain is Multidrug resistance protein MdtH, found in Blochmanniella pennsylvanica (strain BPEN).